Reading from the N-terminus, the 361-residue chain is Anthranilate phosphoribosyltransferase (361 aa).

Residues Gly80, 83–84 (GD), Thr88, 90–93 (NVST), 108–116 (KHGNYSVSS), and Ser120 each bind 5-phospho-alpha-D-ribose 1-diphosphate. Residue Gly80 coordinates anthranilate. Ser92 is a Mg(2+) binding site. Asn111 is a binding site for anthranilate. Residue Arg166 participates in anthranilate binding. Positions 224 and 225 each coordinate Mg(2+). Positions 338 to 361 (EGDGEAASTDSAAASTTAGPEDDD) are disordered. Positions 343-355 (AASTDSAAASTTA) are enriched in low complexity.

This sequence belongs to the anthranilate phosphoribosyltransferase family. As to quaternary structure, homodimer. It depends on Mg(2+) as a cofactor.

It catalyses the reaction N-(5-phospho-beta-D-ribosyl)anthranilate + diphosphate = 5-phospho-alpha-D-ribose 1-diphosphate + anthranilate. Its pathway is amino-acid biosynthesis; L-tryptophan biosynthesis; L-tryptophan from chorismate: step 2/5. Its function is as follows. Catalyzes the transfer of the phosphoribosyl group of 5-phosphorylribose-1-pyrophosphate (PRPP) to anthranilate to yield N-(5'-phosphoribosyl)-anthranilate (PRA). The polypeptide is Anthranilate phosphoribosyltransferase (Halorubrum lacusprofundi (strain ATCC 49239 / DSM 5036 / JCM 8891 / ACAM 34)).